Consider the following 370-residue polypeptide: Peptidyl-prolyl cis-trans isomerase D (370 aa).

At S5 the chain carries Phosphoserine. Positions 19-183 (FFDVDIGGER…KLCVIAECGE (165 aa)) constitute a PPIase cyclophilin-type domain. K171 is subject to N6-acetyllysine. A chaperone activity region spans residues 185–215 (KEGDDWGIFPKDGSGDSHPDFPEDADVDLKD). S198 is subject to Phosphoserine. The tract at residues 214-370 (KDVDKILLIS…EKAAYAKMFA (157 aa)) is interaction with HSP90AB1. TPR repeat units lie at residues 223 to 256 (SEDLKNIGNTFFKSQNWEMAIKKYTKVLRYVEGS), 273 to 306 (LSCVLNIGACKLKMSDWQGAVDSCLEALEIDPSN), and 307 to 340 (TKALYRRAQGWQGLKEYDQALADLKKAQEIAPED).

This sequence belongs to the cyclophilin-type PPIase family. PPIase D subfamily. Identified in ESR1 or NR3C1/GCR steroid receptor-chaperone complexes. Found in HSP90 chaperone complexes with kinase clients LCK or EIF2AK1. Two monomers associate with one HSP90 homodimer. Interacts with HSP90AA1. Interacts with HSP90AB1; PPID and FKBP4 compete for binding to HSP90AB1 and the interaction is mutually exclusive with the PPID:HSPA8 interaction. Interacts with HSPA8; PPID and STIP1 but not FKBP4 compete for binding to HSPA8 and the interaction is mutually exclusive with the PPID:HSP90AB1 interaction. Interacts with S100A1 and S100A2; the interactions dissociate the PPID:HSP90AA1 interaction. Interacts with S100A6. Interacts with MYB, ILF2, XRCC6, RACK1 and RPS3. Interacts with cytoplasmic dynein 1 intermediate chain (DYNC1I1 or DYNC1I2). The N-terminus is blocked. Detected in heart, thymis and brain.

It localises to the cytoplasm. The protein resides in the nucleus. Its subcellular location is the nucleolus. It is found in the nucleoplasm. The catalysed reaction is [protein]-peptidylproline (omega=180) = [protein]-peptidylproline (omega=0). With respect to regulation, less sensitive to inhibition by cyclosporin A than is CYP-18. Its function is as follows. PPIase that catalyzes the cis-trans isomerization of proline imidic peptide bonds in oligopeptides and may therefore assist protein folding. Proposed to act as a co-chaperone in HSP90 complexes such as in unligated steroid receptors heterocomplexes. Different co-chaperones seem to compete for association with HSP90 thus establishing distinct HSP90-co-chaperone-receptor complexes with the potential to exert tissue-specific receptor activity control. May have a preference for estrogen receptor complexes and is not found in glucocorticoid receptor complexes. May be involved in cytoplasmic dynein-dependent movement of the receptor from the cytoplasm to the nucleus. May regulate MYB by inhibiting its DNA-binding activity. Involved in regulation of AHR signaling by promoting the formation of the AHR:ARNT dimer; the function is independent of HSP90 but requires the chaperone activity. Involved in regulation of UV radiation-induced apoptosis. The protein is Peptidyl-prolyl cis-trans isomerase D of Bos taurus (Bovine).